The chain runs to 367 residues: Glutamate 5-kinase (367 aa).

Position 10 (lysine 10) interacts with ATP. Serine 50, aspartate 137, and asparagine 149 together coordinate substrate. ATP is bound by residues 169 to 170 and 211 to 217; these read TD and TGGMSTK. The 79-residue stretch at 275-353 folds into the PUA domain; the sequence is AGEITVDDGA…QQIAEILGYE (79 aa).

It belongs to the glutamate 5-kinase family.

It is found in the cytoplasm. It catalyses the reaction L-glutamate + ATP = L-glutamyl 5-phosphate + ADP. Its pathway is amino-acid biosynthesis; L-proline biosynthesis; L-glutamate 5-semialdehyde from L-glutamate: step 1/2. Its function is as follows. Catalyzes the transfer of a phosphate group to glutamate to form L-glutamate 5-phosphate. The sequence is that of Glutamate 5-kinase from Pectobacterium carotovorum subsp. carotovorum (strain PC1).